A 780-amino-acid chain; its full sequence is ATP-dependent 6-phosphofructokinase, liver type (780 aa).

Alanine 2 carries the N-acetylalanine modification. Positions 2–390 (ASVDLEKLRT…NWNIYKLLSH (389 aa)) are N-terminal catalytic PFK domain 1. Residues glycine 25, 88–89 (RC), and 118–121 (GDGS) each bind ATP. A Mg(2+)-binding site is contributed by aspartate 119. Residues 164 to 166 (SID), arginine 201, 208 to 210 (MGR), glutamate 264, arginine 292, and 298 to 301 (HVQR) each bind substrate. Catalysis depends on aspartate 166, which acts as the Proton acceptor. Position 377 is a phosphoserine (serine 377). The segment at 391–400 (QKISKEKTNF) is interdomain linker. A C-terminal regulatory PFK domain 2 region spans residues 401–780 (SLAILNVGAP…RRTLSIETGF (380 aa)). Beta-D-fructose 2,6-bisphosphate is bound by residues arginine 470, 527-531 (TISNN), arginine 565, 572-574 (MGG), and glutamate 628. O-linked (GlcNAc) serine glycosylation is present at serine 529. Position 640 is a phosphotyrosine (tyrosine 640). Residues arginine 654, 660–663 (HLQQ), and arginine 734 each bind beta-D-fructose 2,6-bisphosphate. The residue at position 775 (serine 775) is a Phosphoserine.

This sequence belongs to the phosphofructokinase type A (PFKA) family. ATP-dependent PFK group I subfamily. Eukaryotic two domain clade 'E' sub-subfamily. As to quaternary structure, homo- and heterotetramers. Phosphofructokinase (PFK) enzyme functions as a tetramer composed of different combinations of 3 types of subunits, called PFKM (M), PFKL (L) and PFKP (P). The composition of the PFK tetramer differs according to the tissue type it is present in. The kinetic and regulatory properties of the tetrameric enzyme are dependent on the subunit composition, hence can vary across tissues. Requires Mg(2+) as cofactor. Post-translationally, glcNAcylation at Ser-529 by OGT decreases enzyme activity, leading to redirect glucose flux through the oxidative pentose phosphate pathway. Glycosylation is stimulated by both hypoxia and glucose deprivation.

The protein localises to the cytoplasm. The enzyme catalyses beta-D-fructose 6-phosphate + ATP = beta-D-fructose 1,6-bisphosphate + ADP + H(+). The protein operates within carbohydrate degradation; glycolysis; D-glyceraldehyde 3-phosphate and glycerone phosphate from D-glucose: step 3/4. With respect to regulation, allosterically activated by ADP, AMP, or fructose 2,6-bisphosphate, and allosterically inhibited by ATP or citrate. GlcNAcylation by OGT overcomes allosteric regulation. Catalyzes the phosphorylation of D-fructose 6-phosphate to fructose 1,6-bisphosphate by ATP, the first committing step of glycolysis. Negatively regulates the phagocyte oxidative burst in response to bacterial infection by controlling cellular NADPH biosynthesis and NADPH oxidase-derived reactive oxygen species. Upon macrophage activation, drives the metabolic switch toward glycolysis, thus preventing glucose turnover that produces NADPH via pentose phosphate pathway. The sequence is that of ATP-dependent 6-phosphofructokinase, liver type (PFKL) from Bos taurus (Bovine).